Reading from the N-terminus, the 576-residue chain is Enolase 4 (576 aa).

The tract at residues 187 to 232 is disordered; sequence ELRNEAMSEAPPQATPTSAPAKDKKGNDKGKKGNITENPLPPAEPP. Over residues 196 to 206 the composition is skewed to low complexity; the sequence is APPQATPTSAP. Residues 207-217 are compositionally biased toward basic and acidic residues; it reads AKDKKGNDKGK. Positions 302 and 524 each coordinate substrate.

This sequence belongs to the enolase family.

It catalyses the reaction (2R)-2-phosphoglycerate = phosphoenolpyruvate + H2O. It participates in carbohydrate degradation; glycolysis; pyruvate from D-glyceraldehyde 3-phosphate: step 4/5. In Danio rerio (Zebrafish), this protein is Enolase 4 (eno4).